An 883-amino-acid polypeptide reads, in one-letter code: Valine--tRNA ligase (883 aa).

Positions proline 46–histidine 56 match the 'HIGH' region motif. The short motif at lysine 520–serine 524 is the 'KMSKS' region element. Lysine 523 is an ATP binding site. Residues leucine 809–arginine 844 are a coiled coil.

This sequence belongs to the class-I aminoacyl-tRNA synthetase family. ValS type 1 subfamily. As to quaternary structure, monomer.

The protein resides in the cytoplasm. The catalysed reaction is tRNA(Val) + L-valine + ATP = L-valyl-tRNA(Val) + AMP + diphosphate. Its function is as follows. Catalyzes the attachment of valine to tRNA(Val). As ValRS can inadvertently accommodate and process structurally similar amino acids such as threonine, to avoid such errors, it has a 'posttransfer' editing activity that hydrolyzes mischarged Thr-tRNA(Val) in a tRNA-dependent manner. This Streptococcus pneumoniae (strain ATCC BAA-255 / R6) protein is Valine--tRNA ligase.